The chain runs to 903 residues: Alanine--tRNA ligase (903 aa).

Positions 581, 585, 693, and 697 each coordinate Zn(2+).

Belongs to the class-II aminoacyl-tRNA synthetase family. Requires Zn(2+) as cofactor.

It localises to the cytoplasm. The catalysed reaction is tRNA(Ala) + L-alanine + ATP = L-alanyl-tRNA(Ala) + AMP + diphosphate. In terms of biological role, catalyzes the attachment of alanine to tRNA(Ala) in a two-step reaction: alanine is first activated by ATP to form Ala-AMP and then transferred to the acceptor end of tRNA(Ala). Also edits incorrectly charged Ser-tRNA(Ala) and Gly-tRNA(Ala) via its editing domain. The polypeptide is Alanine--tRNA ligase (Psychrobacter sp. (strain PRwf-1)).